A 437-amino-acid polypeptide reads, in one-letter code: CCA-adding enzyme (437 aa).

ATP-binding residues include Ser-50 and Lys-53. 2 residues coordinate CTP: Ser-50 and Lys-53. Positions 61, 63, and 112 each coordinate Mg(2+). The ATP site is built by His-135, Lys-155, and Tyr-164. CTP-binding residues include His-135, Lys-155, and Tyr-164.

The protein belongs to the tRNA nucleotidyltransferase/poly(A) polymerase family. Archaeal CCA-adding enzyme subfamily. In terms of assembly, homodimer. The cofactor is Mg(2+).

It catalyses the reaction a tRNA precursor + 2 CTP + ATP = a tRNA with a 3' CCA end + 3 diphosphate. The catalysed reaction is a tRNA with a 3' CCA end + 2 CTP + ATP = a tRNA with a 3' CCACCA end + 3 diphosphate. In terms of biological role, catalyzes the addition and repair of the essential 3'-terminal CCA sequence in tRNAs without using a nucleic acid template. Adds these three nucleotides in the order of C, C, and A to the tRNA nucleotide-73, using CTP and ATP as substrates and producing inorganic pyrophosphate. tRNA 3'-terminal CCA addition is required both for tRNA processing and repair. Also involved in tRNA surveillance by mediating tandem CCA addition to generate a CCACCA at the 3' terminus of unstable tRNAs. While stable tRNAs receive only 3'-terminal CCA, unstable tRNAs are marked with CCACCA and rapidly degraded. This is CCA-adding enzyme from Thermoplasma volcanium (strain ATCC 51530 / DSM 4299 / JCM 9571 / NBRC 15438 / GSS1).